Reading from the N-terminus, the 401-residue chain is Argininosuccinate synthase (401 aa).

ATP is bound at residue 9–17; it reads AYSGGLDTS. L-citrulline is bound at residue Tyr86. Position 116 (Gly116) interacts with ATP. Thr118, Asn122, and Asp123 together coordinate L-aspartate. Asn122 is an L-citrulline binding site. Positions 126, 174, 183, 259, and 271 each coordinate L-citrulline.

Belongs to the argininosuccinate synthase family. Type 1 subfamily. As to quaternary structure, homotetramer.

It is found in the cytoplasm. The enzyme catalyses L-citrulline + L-aspartate + ATP = 2-(N(omega)-L-arginino)succinate + AMP + diphosphate + H(+). It participates in amino-acid biosynthesis; L-arginine biosynthesis; L-arginine from L-ornithine and carbamoyl phosphate: step 2/3. The polypeptide is Argininosuccinate synthase (Bacillus mycoides (strain KBAB4) (Bacillus weihenstephanensis)).